The sequence spans 137 residues: Large ribosomal subunit protein uL16 (137 aa).

The protein belongs to the universal ribosomal protein uL16 family. Part of the 50S ribosomal subunit.

Binds 23S rRNA and is also seen to make contacts with the A and possibly P site tRNAs. The polypeptide is Large ribosomal subunit protein uL16 (Agrobacterium fabrum (strain C58 / ATCC 33970) (Agrobacterium tumefaciens (strain C58))).